Consider the following 380-residue polypeptide: Transmembrane protein 229A (380 aa).

Positions 1-40 (MAGSDVDSEGPARRGGAARRPGAPGGPGSEAAAGCPEPLS) are disordered. The next 2 membrane-spanning stretches (helical) occupy residues 51 to 71 (LPAW…DVLV) and 117 to 137 (AFVF…TLAG). Positions 188 to 236 (RQQQQQQQQQQQQRRGALPVPPGARVPTAAGARRRRPRGPRGAGGAPSQ) are disordered. The span at 190–202 (QQQQQQQQQQQRR) shows a compositional bias: low complexity. 4 helical membrane-spanning segments follow: residues 244–264 (FLFF…FFNV), 278–298 (LWSF…YFHL), 310–330 (VPIY…GLRT), and 343–363 (LNFM…LSVY).

The protein belongs to the TMEM229 family.

The protein localises to the membrane. The sequence is that of Transmembrane protein 229A (TMEM229A) from Homo sapiens (Human).